The chain runs to 72 residues: MSKQDVIELEGVVKEALPNAMFIVTLENGHEVLGHISGKLRMNFIRILPGDKVTVELSPYDLSRGRITWRKK.

One can recognise an S1-like domain in the interval 1 to 72 (MSKQDVIELE…SRGRITWRKK (72 aa)).

It belongs to the IF-1 family. As to quaternary structure, component of the 30S ribosomal translation pre-initiation complex which assembles on the 30S ribosome in the order IF-2 and IF-3, IF-1 and N-formylmethionyl-tRNA(fMet); mRNA recruitment can occur at any time during PIC assembly.

It is found in the cytoplasm. In terms of biological role, one of the essential components for the initiation of protein synthesis. Stabilizes the binding of IF-2 and IF-3 on the 30S subunit to which N-formylmethionyl-tRNA(fMet) subsequently binds. Helps modulate mRNA selection, yielding the 30S pre-initiation complex (PIC). Upon addition of the 50S ribosomal subunit IF-1, IF-2 and IF-3 are released leaving the mature 70S translation initiation complex. The sequence is that of Translation initiation factor IF-1 from Alkaliphilus oremlandii (strain OhILAs) (Clostridium oremlandii (strain OhILAs)).